Consider the following 75-residue polypeptide: Pi-hexatoxin-Hi1a (75 aa).

Cystine bridges form between Cys-3/Cys-18, Cys-10/Cys-23, Cys-17/Cys-33, Cys-40/Cys-55, Cys-47/Cys-60, and Cys-54/Cys-71. 2 Domain repeats span residues Cys-3–Cys-33 and Cys-40–Cys-71. The segment at Cys-3 to Cys-71 is 2 X approximate repeats with cysteine pattern C-C-CC-C-C.

It belongs to the psalmotoxin-1 family. Double-knot toxin subfamily. Expressed by the venom gland.

It localises to the secreted. This toxin potently and selectively inhibits ASIC1a (IC(50)=0.4 nM on rASIC1a and IC(50)=0.52 nM on hASIC1a), an isoform of the gene ASIC1. It incompletely inhibits ASIC1a activation in a pH-independent and slowly reversible manner (Tau(off)=14.2 minutes for rASIC1a and 31.8 minutes for hASIC1a). This toxin acts by binding to and stabilizing the closed state of the channel, thereby impeding the transition into a conducting state. This toxin may bind to the acidic pocket of ASIC1a, since mutation of a key residue of this pocket (Arg-350) abolishes the ability of the toxin to inhibit ASIC1a. In addition, it shows antiparasitic activities, since it moderately inhibits the larval development of the major pathogenic nematode of ruminants (H.contortus, IC(50)=22.9 uM). In vivo, this toxin protects the brain from neuronal injury when administered up to 8 hours after stroke onset. This is Pi-hexatoxin-Hi1a from Hadronyche infensa (Fraser island funnel-web spider).